A 470-amino-acid chain; its full sequence is Argininosuccinate lyase (470 aa).

Belongs to the lyase 1 family. Argininosuccinate lyase subfamily.

Its subcellular location is the cytoplasm. It carries out the reaction 2-(N(omega)-L-arginino)succinate = fumarate + L-arginine. Its pathway is amino-acid biosynthesis; L-arginine biosynthesis; L-arginine from L-ornithine and carbamoyl phosphate: step 3/3. This Bordetella avium (strain 197N) protein is Argininosuccinate lyase.